A 37-amino-acid chain; its full sequence is Dolichyl-diphosphooligosaccharide--protein glycosyltransferase subunit 4A (37 aa).

Residues 1–7 lie on the Lumenal side of the membrane; it reads MIDDQDL. The helical transmembrane segment at 8 to 28 threads the bilayer; it reads GFIANFLGIFIFALVIAYHYV. Residues 29–37 are Cytoplasmic-facing; that stretch reads TADPKYEAT.

It belongs to the OST4 family. Component of the oligosaccharyltransferase (OST) complex.

The protein resides in the endoplasmic reticulum membrane. Subunit of the oligosaccharyl transferase (OST) complex that catalyzes the initial transfer of a defined glycan (Glc(3)Man(9)GlcNAc(2) in eukaryotes) from the lipid carrier dolichol-pyrophosphate to an asparagine residue within an Asn-X-Ser/Thr consensus motif in nascent polypeptide chains, the first step in protein N-glycosylation. N-glycosylation occurs cotranslationally and the complex associates with the Sec61 complex at the channel-forming translocon complex that mediates protein translocation across the endoplasmic reticulum (ER). All subunits are required for a maximal enzyme activity. This chain is Dolichyl-diphosphooligosaccharide--protein glycosyltransferase subunit 4A (OST4A), found in Arabidopsis thaliana (Mouse-ear cress).